Reading from the N-terminus, the 246-residue chain is Probable transcriptional regulatory protein CA_C2295 (246 aa).

Belongs to the TACO1 family.

The protein resides in the cytoplasm. The protein is Probable transcriptional regulatory protein CA_C2295 of Clostridium acetobutylicum (strain ATCC 824 / DSM 792 / JCM 1419 / IAM 19013 / LMG 5710 / NBRC 13948 / NRRL B-527 / VKM B-1787 / 2291 / W).